Consider the following 241-residue polypeptide: Probable transcriptional regulatory protein Reut_A2522 (241 aa).

This sequence belongs to the TACO1 family.

It localises to the cytoplasm. The sequence is that of Probable transcriptional regulatory protein Reut_A2522 from Cupriavidus pinatubonensis (strain JMP 134 / LMG 1197) (Cupriavidus necator (strain JMP 134)).